We begin with the raw amino-acid sequence, 598 residues long: Dihydroxy-acid dehydratase, mitochondrial (598 aa).

The transit peptide at 1 to 18 (MMFCKLLRCQNGIASKRA) directs the protein to the mitochondrion. Position 84 (cysteine 84) interacts with [2Fe-2S] cluster. Aspartate 116 contributes to the Mg(2+) binding site. Cysteine 157 is a binding site for [2Fe-2S] cluster. A Mg(2+)-binding site is contributed by aspartate 158. Residue cysteine 232 coordinates [2Fe-2S] cluster. Glutamate 485 contributes to the Mg(2+) binding site. Catalysis depends on serine 511, which acts as the Proton acceptor.

This sequence belongs to the IlvD/Edd family. It depends on [2Fe-2S] cluster as a cofactor. Requires Mg(2+) as cofactor.

It localises to the mitochondrion. It catalyses the reaction (2R)-2,3-dihydroxy-3-methylbutanoate = 3-methyl-2-oxobutanoate + H2O. The enzyme catalyses (2R,3R)-2,3-dihydroxy-3-methylpentanoate = (S)-3-methyl-2-oxopentanoate + H2O. Its pathway is amino-acid biosynthesis; L-isoleucine biosynthesis; L-isoleucine from 2-oxobutanoate: step 3/4. It participates in amino-acid biosynthesis; L-valine biosynthesis; L-valine from pyruvate: step 3/4. Dihydroxyacid dehydratase that catalyzes the third step in the common pathway leading to biosynthesis of branched-chain amino acids. Catalyzes the dehydration of (2R,3R)-2,3-dihydroxy-3-methylpentanoate (2,3-dihydroxy-3-methylvalerate) into 2-oxo-3-methylpentanoate (2-oxo-3-methylvalerate) and of (2R)-2,3-dihydroxy-3-methylbutanoate (2,3-dihydroxyisovalerate) into 2-oxo-3-methylbutanoate (2-oxoisovalerate), the penultimate precursor to L-isoleucine and L-valine, respectively. The sequence is that of Dihydroxy-acid dehydratase, mitochondrial from Schizosaccharomyces pombe (strain 972 / ATCC 24843) (Fission yeast).